An 87-amino-acid polypeptide reads, in one-letter code: Large ribosomal subunit protein uL23c (87 aa).

This sequence belongs to the universal ribosomal protein uL23 family. Part of the 50S ribosomal subunit.

The protein localises to the plastid. It is found in the chloroplast. Its function is as follows. Binds to 23S rRNA. The chain is Large ribosomal subunit protein uL23c (rpl23) from Bigelowiella natans (Pedinomonas minutissima).